A 156-amino-acid chain; its full sequence is Persephin (156 aa).

Positions 1-21 (MAVGKFLLGSLLLLSLQLGQG) are cleaved as a signal peptide. 3 disulfides stabilise this stretch: Cys66–Cys124, Cys93–Cys152, and Cys97–Cys154.

The protein belongs to the TGF-beta family. GDNF subfamily. As to quaternary structure, homodimer; disulfide-linked. Interacts with GFRA4 coreceptor and RET: forms a 2:2:2 ternary complex composed of PSPN ligand, GFRA4 and RET receptor.

Its subcellular location is the secreted. Its function is as follows. Growth factor that exhibits neurotrophic activity on mesencephalic dopaminergic and motor neurons. Acts by binding to its coreceptor, GFRA4, leading to autophosphorylation and activation of the RET receptor. In Homo sapiens (Human), this protein is Persephin.